Consider the following 603-residue polypeptide: Nuclear receptor subfamily 2 group C member 1 (603 aa).

Residues 1–178 (MATIEEIAHQ…RLQRCIAFGM (178 aa)) are required for interaction with KAT2B. A DNA-binding region (nuclear receptor) is located at residues 110–185 (FDLCVVCGDK…FGMKQDSVQC (76 aa)). 2 NR C4-type zinc fingers span residues 113-133 (CVVC…CEGC) and 149-173 (CRGS…LQRC). Phosphoserine occurs at positions 197 and 215. At threonine 220 the chain carries Phosphothreonine. Residue threonine 222 is modified to Phosphothreonine; by MAPK1. Lysine 250 participates in a covalent cross-link: Glycyl lysine isopeptide (Lys-Gly) (interchain with G-Cter in SUMO2). One can recognise an NR LBD domain in the interval 348-590 (GSVHLITGDS…SVIPHILKME (243 aa)). At serine 581 the chain carries Phosphoserine; by PKC. The required for interaction with NRIP1 stretch occupies residues 584-603 (PHILKMEPADYNSQIIGHSI). A Glycyl lysine isopeptide (Lys-Gly) (interchain with G-Cter in SUMO2) cross-link involves residue lysine 588.

This sequence belongs to the nuclear hormone receptor family. NR2 subfamily. As to quaternary structure, homodimer. Heterodimer; binds DNA as a heterodimer with NR2C2 required for chromatin remodeling and for binding to promoter regions such as globin DR1 repeats. Interacts with NRIP1 (via its LXXLL motifs); the interaction provides corepressor activity. Interacts with HDAC3 (via the DNA-binding domain). Interacts with HDAC4 (via the DNA-binding domain). Interacts with PIAS1; the interaction is required for sumoylation of NR2C1. Interacts with UBE2I; the interaction is required for sumoylation of NR2C1. Interacts with KAT2B; the interaction acts as a corepressor of gene expression. Interacts with ESR1; the interaction prevents homodimerization of ESR1 and suppresses its transcriptional activity and cell growth. Post-translationally, sumoylation requires both PIAS1 and UBE2I. Sumoylation appears to dissociate NR2C1 from the PML nuclear bodies. Enhances the interaction with NRIP1 but inhibits interaction with KAT2B. In proliferating cells, stimulation by all-trans retinoic acid, activation of MAPK1-mediated phosphorylation and recruitment to PML bodies with subsequent sumoylation, suppresses OCT4 expression. In terms of processing, phosphorylated on several serine and threonine residues. Phosphorylation on Thr-222, stimulated by all-trans retinoic acid (atRA) mediates PML location and sumoylation in proliferating cells which then modulates its association with effector molecules, KAT2B and NRIP1. Phosphorylation on Ser-581 by PKC is important for protein stability and function as activator of RARB.

The protein localises to the nucleus. It is found in the PML body. In terms of biological role, orphan nuclear receptor. Binds the IR7 element in the promoter of its own gene in an autoregulatory negative feedback mechanism. Primarily repressor of a broad range of genes. Binds to hormone response elements (HREs) consisting of two 5'-AGGTCA-3' half site direct repeat consensus sequences. Together with NR2C2, forms the core of the DRED (direct repeat erythroid-definitive) complex that represses embryonic and fetal globin transcription. Also activator of OCT4 gene expression. May be involved in stem cell proliferation and differentiation. Mediator of retinoic acid-regulated preadipocyte proliferation. This is Nuclear receptor subfamily 2 group C member 1 (NR2C1) from Homo sapiens (Human).